The chain runs to 533 residues: uncharacterized protein (533 aa).

Positions M1–S26 are disordered. Residues S20 and S23 each carry the phosphoserine modification. Y25 carries the phosphotyrosine modification. S26 carries the post-translational modification Phosphoserine. A run of 10 helical transmembrane segments spans residues I178 to I198, Y213 to L230, P242 to H264, A274 to S296, L313 to A333, S353 to S373, R394 to F414, I435 to L455, G466 to V486, and I495 to F515.

The protein belongs to the multi antimicrobial extrusion (MATE) (TC 2.A.66.1) family.

Its subcellular location is the vacuole membrane. This is an uncharacterized protein from Schizosaccharomyces pombe (strain 972 / ATCC 24843) (Fission yeast).